The sequence spans 541 residues: Chaperonin GroEL 1 (541 aa).

ATP-binding positions include threonine 29–proline 32, aspartate 86–threonine 90, glycine 413, asparagine 478–alanine 480, and aspartate 494. The interval valine 520–histidine 541 is disordered. The segment covering lysine 523–glycine 533 has biased composition (basic and acidic residues).

It belongs to the chaperonin (HSP60) family. Forms a cylinder of 14 subunits composed of two heptameric rings stacked back-to-back. Interacts with the co-chaperonin GroES.

It localises to the cytoplasm. The enzyme catalyses ATP + H2O + a folded polypeptide = ADP + phosphate + an unfolded polypeptide.. In terms of biological role, together with its co-chaperonin GroES, plays an essential role in assisting protein folding. The GroEL-GroES system forms a nano-cage that allows encapsulation of the non-native substrate proteins and provides a physical environment optimized to promote and accelerate protein folding. This Mycolicibacterium gilvum (strain PYR-GCK) (Mycobacterium gilvum (strain PYR-GCK)) protein is Chaperonin GroEL 1.